The following is a 104-amino-acid chain: MKSMIAAILFALVATSLAGYLGYAGYGGPYGGYGAFGFRGVPVGRAVAYSSSIRHPGYGYGLGLGYGGLGYGLGYGGYGGYGLGYGYGGYGLGLGHGLGLGKVW.

Positions 1–18 (MKSMIAAILFALVATSLA) are cleaved as a signal peptide.

It belongs to the non-disulfide-bridged peptide (NDBP) superfamily. As to expression, expressed by the venom gland.

The protein resides in the secreted. This chain is Glycine-rich protein, found in Lychas mucronatus (Chinese swimming scorpion).